A 339-amino-acid chain; its full sequence is Phenylalanine--tRNA ligase alpha subunit (339 aa).

Glu-253 contributes to the Mg(2+) binding site.

The protein belongs to the class-II aminoacyl-tRNA synthetase family. Phe-tRNA synthetase alpha subunit type 1 subfamily. Tetramer of two alpha and two beta subunits. Mg(2+) serves as cofactor.

It is found in the cytoplasm. The catalysed reaction is tRNA(Phe) + L-phenylalanine + ATP = L-phenylalanyl-tRNA(Phe) + AMP + diphosphate + H(+). The polypeptide is Phenylalanine--tRNA ligase alpha subunit (Alcanivorax borkumensis (strain ATCC 700651 / DSM 11573 / NCIMB 13689 / SK2)).